We begin with the raw amino-acid sequence, 210 residues long: MKETIAQHLLDIEAVTLRPNDPFTWSSGIKSPIYCDNRLTMGYPHIRQSIAEGFEQLIRSHFPEVTVVAGTATAGIPHAAWVSDRLQAPMVYVRSKSKGHGKQNQIEGKLSSKDRVVIIEDLISTGGSVIQAADALREAGADVLGVVAIFTYGLEKGQDQLEAANLPSYVLTDYPTLLDVAIRRGDISEEELQKLQKWRENPSSQSWMNE.

5-phospho-alpha-D-ribose 1-diphosphate-binding positions include arginine 94, lysine 98, histidine 100, and 120-128 (EDLISTGGS). Serine 124 contacts orotate.

The protein belongs to the purine/pyrimidine phosphoribosyltransferase family. PyrE subfamily. In terms of assembly, homodimer. Mg(2+) is required as a cofactor.

It catalyses the reaction orotidine 5'-phosphate + diphosphate = orotate + 5-phospho-alpha-D-ribose 1-diphosphate. It participates in pyrimidine metabolism; UMP biosynthesis via de novo pathway; UMP from orotate: step 1/2. Functionally, catalyzes the transfer of a ribosyl phosphate group from 5-phosphoribose 1-diphosphate to orotate, leading to the formation of orotidine monophosphate (OMP). The sequence is that of Orotate phosphoribosyltransferase from Halalkalibacterium halodurans (strain ATCC BAA-125 / DSM 18197 / FERM 7344 / JCM 9153 / C-125) (Bacillus halodurans).